Consider the following 354-residue polypeptide: Holliday junction branch migration complex subunit RuvB (354 aa).

The interval 1-22 is disordered; it reads MTIQTDDFAPAPPRVVSAAPAS. Residues 5-193 are large ATPase domain (RuvB-L); it reads TDDFAPAPPR…FGIVARLEFY (189 aa). Residues Leu-32, Arg-33, Gly-74, Lys-77, Thr-78, Thr-79, 140 to 142, Arg-183, Tyr-193, and Arg-230 each bind ATP; that span reads EDY. Thr-78 is a Mg(2+) binding site. Residues 194-264 are small ATPAse domain (RuvB-S); it reads TPEELALIVR…IAHKALVMLD (71 aa). Positions 267 to 354 are head domain (RuvB-H); sequence PQGFDLMDRK…RSDGQDLFGI (88 aa). DNA is bound by residues Arg-303, Arg-322, and Arg-327.

This sequence belongs to the RuvB family. Homohexamer. Forms an RuvA(8)-RuvB(12)-Holliday junction (HJ) complex. HJ DNA is sandwiched between 2 RuvA tetramers; dsDNA enters through RuvA and exits via RuvB. An RuvB hexamer assembles on each DNA strand where it exits the tetramer. Each RuvB hexamer is contacted by two RuvA subunits (via domain III) on 2 adjacent RuvB subunits; this complex drives branch migration. In the full resolvosome a probable DNA-RuvA(4)-RuvB(12)-RuvC(2) complex forms which resolves the HJ.

The protein localises to the cytoplasm. The enzyme catalyses ATP + H2O = ADP + phosphate + H(+). Its function is as follows. The RuvA-RuvB-RuvC complex processes Holliday junction (HJ) DNA during genetic recombination and DNA repair, while the RuvA-RuvB complex plays an important role in the rescue of blocked DNA replication forks via replication fork reversal (RFR). RuvA specifically binds to HJ cruciform DNA, conferring on it an open structure. The RuvB hexamer acts as an ATP-dependent pump, pulling dsDNA into and through the RuvAB complex. RuvB forms 2 homohexamers on either side of HJ DNA bound by 1 or 2 RuvA tetramers; 4 subunits per hexamer contact DNA at a time. Coordinated motions by a converter formed by DNA-disengaged RuvB subunits stimulates ATP hydrolysis and nucleotide exchange. Immobilization of the converter enables RuvB to convert the ATP-contained energy into a lever motion, pulling 2 nucleotides of DNA out of the RuvA tetramer per ATP hydrolyzed, thus driving DNA branch migration. The RuvB motors rotate together with the DNA substrate, which together with the progressing nucleotide cycle form the mechanistic basis for DNA recombination by continuous HJ branch migration. Branch migration allows RuvC to scan DNA until it finds its consensus sequence, where it cleaves and resolves cruciform DNA. The polypeptide is Holliday junction branch migration complex subunit RuvB (Variovorax paradoxus (strain S110)).